The primary structure comprises 105 residues: MAEWNGEYISPYAEHGKKSEQVKKITVSIPLKVLKILTDERTRRQVNNLRHATNSELLCEAFLHAFTGQPLPDDVDLRKERSDEIPEEAKAIMRAMGVDPDTWEY.

The protein belongs to the MetJ family. Homodimer.

The protein localises to the cytoplasm. In terms of biological role, this regulatory protein, when combined with SAM (S-adenosylmethionine) represses the expression of the methionine regulon and of enzymes involved in SAM synthesis. In Erwinia tasmaniensis (strain DSM 17950 / CFBP 7177 / CIP 109463 / NCPPB 4357 / Et1/99), this protein is Met repressor.